A 49-amino-acid chain; its full sequence is Large ribosomal subunit protein bL33B (49 aa).

The protein belongs to the bacterial ribosomal protein bL33 family.

The polypeptide is Large ribosomal subunit protein bL33B (Shouchella clausii (strain KSM-K16) (Alkalihalobacillus clausii)).